A 303-amino-acid polypeptide reads, in one-letter code: Coenzyme PQQ synthesis protein B (303 aa).

This sequence belongs to the PqqB family.

It participates in cofactor biosynthesis; pyrroloquinoline quinone biosynthesis. Its function is as follows. May be involved in the transport of PQQ or its precursor to the periplasm. The chain is Coenzyme PQQ synthesis protein B from Pseudomonas entomophila (strain L48).